Consider the following 385-residue polypeptide: Lipid-A-disaccharide synthase (385 aa).

It belongs to the LpxB family.

It carries out the reaction a lipid X + a UDP-2-N,3-O-bis[(3R)-3-hydroxyacyl]-alpha-D-glucosamine = a lipid A disaccharide + UDP + H(+). The protein operates within bacterial outer membrane biogenesis; LPS lipid A biosynthesis. Functionally, condensation of UDP-2,3-diacylglucosamine and 2,3-diacylglucosamine-1-phosphate to form lipid A disaccharide, a precursor of lipid A, a phosphorylated glycolipid that anchors the lipopolysaccharide to the outer membrane of the cell. The protein is Lipid-A-disaccharide synthase of Xylella fastidiosa (strain M12).